The sequence spans 304 residues: Probable casein kinase I homolog ECU03_0910 (304 aa).

One can recognise a Protein kinase domain in the interval 8–304; the sequence is IKLVQKIASG…SDSMGDLEIL (297 aa). ATP is bound by residues 14–22 and Lys37; that span reads IASGAFGDI. Asp129 serves as the catalytic Proton acceptor.

It belongs to the protein kinase superfamily. CK1 Ser/Thr protein kinase family. Casein kinase I subfamily.

It localises to the nucleus. It carries out the reaction L-seryl-[protein] + ATP = O-phospho-L-seryl-[protein] + ADP + H(+). The enzyme catalyses L-threonyl-[protein] + ATP = O-phospho-L-threonyl-[protein] + ADP + H(+). In terms of biological role, involved in DNA repair. May regulate the activity of protein(s) involved in double strand break repair caused by gamma rays. The chain is Probable casein kinase I homolog ECU03_0910 from Encephalitozoon cuniculi (strain GB-M1) (Microsporidian parasite).